Here is a 92-residue protein sequence, read N- to C-terminus: DNA-directed RNA polymerase subunit omega (92 aa).

This sequence belongs to the RNA polymerase subunit omega family. As to quaternary structure, the RNAP catalytic core consists of 2 alpha, 1 beta, 1 beta' and 1 omega subunit. When a sigma factor is associated with the core the holoenzyme is formed, which can initiate transcription.

The enzyme catalyses RNA(n) + a ribonucleoside 5'-triphosphate = RNA(n+1) + diphosphate. Promotes RNA polymerase assembly. Latches the N- and C-terminal regions of the beta' subunit thereby facilitating its interaction with the beta and alpha subunits. The chain is DNA-directed RNA polymerase subunit omega from Shewanella oneidensis (strain ATCC 700550 / JCM 31522 / CIP 106686 / LMG 19005 / NCIMB 14063 / MR-1).